Here is a 147-residue protein sequence, read N- to C-terminus: Large ribosomal subunit protein bL9 (147 aa).

This sequence belongs to the bacterial ribosomal protein bL9 family.

In terms of biological role, binds to the 23S rRNA. The polypeptide is Large ribosomal subunit protein bL9 (Campylobacter jejuni subsp. jejuni serotype O:2 (strain ATCC 700819 / NCTC 11168)).